Reading from the N-terminus, the 207-residue chain is 2,3-bisphosphoglycerate-dependent phosphoglycerate mutase (207 aa).

Residues 10 to 17, 23 to 24, R62, 89 to 92, K100, 116 to 117, and 160 to 161 each bind substrate; these read RHGQSEWN, TG, ERDY, RR, and GN. The active-site Tele-phosphohistidine intermediate is the H11. The active-site Proton donor/acceptor is E89.

Belongs to the phosphoglycerate mutase family. BPG-dependent PGAM subfamily. Homodimer.

It carries out the reaction (2R)-2-phosphoglycerate = (2R)-3-phosphoglycerate. The protein operates within carbohydrate degradation; glycolysis; pyruvate from D-glyceraldehyde 3-phosphate: step 3/5. Functionally, catalyzes the interconversion of 2-phosphoglycerate and 3-phosphoglycerate. This chain is 2,3-bisphosphoglycerate-dependent phosphoglycerate mutase, found in Bradyrhizobium diazoefficiens (strain JCM 10833 / BCRC 13528 / IAM 13628 / NBRC 14792 / USDA 110).